A 290-amino-acid chain; its full sequence is Shikimate dehydrogenase (NADP(+)) (290 aa).

Residues 20-22 (SLS) and threonine 67 contribute to the shikimate site. The active-site Proton acceptor is lysine 71. Positions 92 and 107 each coordinate shikimate. Residues 132 to 136 (GAGGA) and methionine 228 contribute to the NADP(+) site. Residue tyrosine 230 participates in shikimate binding. NADP(+) is bound at residue glycine 251.

It belongs to the shikimate dehydrogenase family. Homodimer.

It carries out the reaction shikimate + NADP(+) = 3-dehydroshikimate + NADPH + H(+). It participates in metabolic intermediate biosynthesis; chorismate biosynthesis; chorismate from D-erythrose 4-phosphate and phosphoenolpyruvate: step 4/7. Involved in the biosynthesis of the chorismate, which leads to the biosynthesis of aromatic amino acids. Catalyzes the reversible NADPH linked reduction of 3-dehydroshikimate (DHSA) to yield shikimate (SA). The sequence is that of Shikimate dehydrogenase (NADP(+)) from Citrifermentans bemidjiense (strain ATCC BAA-1014 / DSM 16622 / JCM 12645 / Bem) (Geobacter bemidjiensis).